A 255-amino-acid chain; its full sequence is Phosphate import ATP-binding protein PstB (255 aa).

Residues 8–250 (IKSSNLNVHY…PGNKMTQDYI (243 aa)) form the ABC transporter domain. 40–47 (GPSGCGKS) lines the ATP pocket.

The protein belongs to the ABC transporter superfamily. Phosphate importer (TC 3.A.1.7) family. As to quaternary structure, the complex is composed of two ATP-binding proteins (PstB), two transmembrane proteins (PstC and PstA) and a solute-binding protein (PstS).

The protein resides in the cell inner membrane. It catalyses the reaction phosphate(out) + ATP + H2O = ADP + 2 phosphate(in) + H(+). Its function is as follows. Part of the ABC transporter complex PstSACB involved in phosphate import. Responsible for energy coupling to the transport system. The sequence is that of Phosphate import ATP-binding protein PstB from Pelagibacter ubique (strain HTCC1062).